A 323-amino-acid polypeptide reads, in one-letter code: Protoheme IX farnesyltransferase (323 aa).

8 helical membrane-spanning segments follow: residues 28 to 48 (IIPL…EGRV), 50 to 70 (LFTL…AQVM), 101 to 121 (FIFA…FVNL), 122 to 142 (LSGL…THLL), 150 to 170 (IVIG…AVTG), 178 to 198 (ILFA…ALMI), 235 to 255 (FLLV…AIIL), and 282 to 302 (FSIF…LPLT).

It belongs to the UbiA prenyltransferase family. Protoheme IX farnesyltransferase subfamily.

Its subcellular location is the cell inner membrane. It catalyses the reaction heme b + (2E,6E)-farnesyl diphosphate + H2O = Fe(II)-heme o + diphosphate. It participates in porphyrin-containing compound metabolism; heme O biosynthesis; heme O from protoheme: step 1/1. Its function is as follows. Converts heme B (protoheme IX) to heme O by substitution of the vinyl group on carbon 2 of heme B porphyrin ring with a hydroxyethyl farnesyl side group. In Rippkaea orientalis (strain PCC 8801 / RF-1) (Cyanothece sp. (strain PCC 8801)), this protein is Protoheme IX farnesyltransferase.